The chain runs to 495 residues: Ribosomal protein uS12 methylthiotransferase RimO (495 aa).

The region spanning 5–121 (RTVALVTLGC…ISDRLQTILN (117 aa)) is the MTTase N-terminal domain. Positions 14, 50, and 84 each coordinate [4Fe-4S] cluster. The tract at residues 145-183 (QSAGADVALPGHGAPEGLPEDLPEGLAPESGPRAPLRRR) is disordered. The region spanning 184 to 415 (LDGSPVASVK…RLAEELVAQR (232 aa)) is the Radical SAM core domain. Cys198, Cys202, and Cys205 together coordinate [4Fe-4S] cluster. In terms of domain architecture, TRAM spans 417–484 (EERVGETVHV…GVDLVAEPLP (68 aa)).

This sequence belongs to the methylthiotransferase family. RimO subfamily. The cofactor is [4Fe-4S] cluster.

The protein localises to the cytoplasm. The enzyme catalyses L-aspartate(89)-[ribosomal protein uS12]-hydrogen + (sulfur carrier)-SH + AH2 + 2 S-adenosyl-L-methionine = 3-methylsulfanyl-L-aspartate(89)-[ribosomal protein uS12]-hydrogen + (sulfur carrier)-H + 5'-deoxyadenosine + L-methionine + A + S-adenosyl-L-homocysteine + 2 H(+). Its function is as follows. Catalyzes the methylthiolation of an aspartic acid residue of ribosomal protein uS12. In Streptomyces avermitilis (strain ATCC 31267 / DSM 46492 / JCM 5070 / NBRC 14893 / NCIMB 12804 / NRRL 8165 / MA-4680), this protein is Ribosomal protein uS12 methylthiotransferase RimO.